Consider the following 1092-residue polypeptide: Isoleucine--tRNA ligase (1092 aa).

The short motif at 53–63 is the 'HIGH' region element; the sequence is PFANGLPHYGH. Positions 613 to 617 match the 'KMSKS' region motif; sequence KLSKR. Lysine 616 provides a ligand contact to ATP.

Belongs to the class-I aminoacyl-tRNA synthetase family. IleS type 2 subfamily. In terms of assembly, monomer. Zn(2+) serves as cofactor.

It localises to the cytoplasm. The catalysed reaction is tRNA(Ile) + L-isoleucine + ATP = L-isoleucyl-tRNA(Ile) + AMP + diphosphate. Functionally, catalyzes the attachment of isoleucine to tRNA(Ile). As IleRS can inadvertently accommodate and process structurally similar amino acids such as valine, to avoid such errors it has two additional distinct tRNA(Ile)-dependent editing activities. One activity is designated as 'pretransfer' editing and involves the hydrolysis of activated Val-AMP. The other activity is designated 'posttransfer' editing and involves deacylation of mischarged Val-tRNA(Ile). The chain is Isoleucine--tRNA ligase from Rickettsia conorii (strain ATCC VR-613 / Malish 7).